A 218-amino-acid polypeptide reads, in one-letter code: Telomere repeats-binding bouquet formation protein 2 (218 aa).

Residues 117 to 143 (HDRMASSDKENIRPTPEHKQELSKSAE) are disordered.

This sequence belongs to the TERB2 family. As to quaternary structure, component of the MAJIN-TERB1-TERB2 complex, composed of MAJIN, TERB1 and TERB2. As to expression, specifically expressed in germline tissues.

The protein localises to the chromosome. It localises to the telomere. The protein resides in the nucleus inner membrane. Functionally, meiosis-specific telomere-associated protein involved in meiotic telomere attachment to the nucleus inner membrane, a crucial step for homologous pairing and synapsis. Component of the MAJIN-TERB1-TERB2 complex, which promotes telomere cap exchange by mediating attachment of telomeric DNA to the inner nuclear membrane and replacement of the protective cap of telomeric chromosomes: in early meiosis, the MAJIN-TERB1-TERB2 complex associates with telomeric DNA and the shelterin/telosome complex. During prophase, the complex matures and promotes release of the shelterin/telosome complex from telomeric DNA. The chain is Telomere repeats-binding bouquet formation protein 2 from Mus musculus (Mouse).